Reading from the N-terminus, the 307-residue chain is MQAALMAFFMLLFSLLSLLGIAANGFIVLVLGREWLRYGRLLPLDMILISLGASRXCLQLVGTVHNFYYSARKVEYSGGLGRQFFHLHWHFLNSATFWFCSWLSVLFCVKIANITHPTFLWLKWRFPGWVPWLLLGSVLISFIITLLFFWVNYPVYQELLIRKFSGNMTYKWNTRIETYYFPSLKLVIWSIPFSVFLVSIMLLINSLRRHTQRMQHNGHSLQDPSTQAHTRALKSLISFLFLYALSFLSLIIDATKFISMQNDFYWPWQIAVYLCISVHPFILIFSNLKLRSMFWQVLLLARGFWVA.

Residues 1–7 (MQAALMA) are Extracellular-facing. Residues 8-28 (FFMLLFSLLSLLGIAANGFIV) form a helical membrane-spanning segment. At 29–40 (LVLGREWLRYGR) the chain is on the cytoplasmic side. The helical transmembrane segment at 41-61 (LLPLDMILISLGASRXCLQLV) threads the bilayer. Over 62-88 (GTVHNFYYSARKVEYSGGLGRQFFHLH) the chain is Extracellular. A helical transmembrane segment spans residues 89-109 (WHFLNSATFWFCSWLSVLFCV). Residues 110 to 129 (KIANITHPTFLWLKWRFPGW) are Cytoplasmic-facing. Residues 130 to 150 (VPWLLLGSVLISFIITLLFFW) form a helical membrane-spanning segment. The Extracellular portion of the chain corresponds to 151-183 (VNYPVYQELLIRKFSGNMTYKWNTRIETYYFPS). Residue Asn-167 is glycosylated (N-linked (GlcNAc...) asparagine). A helical transmembrane segment spans residues 184-204 (LKLVIWSIPFSVFLVSIMLLI). The Cytoplasmic segment spans residues 205–234 (NSLRRHTQRMQHNGHSLQDPSTQAHTRALK). A helical transmembrane segment spans residues 235-255 (SLISFLFLYALSFLSLIIDAT). Residues 256–264 (KFISMQNDF) lie on the Extracellular side of the membrane. Residues 265 to 285 (YWPWQIAVYLCISVHPFILIF) traverse the membrane as a helical segment. Residues 286-307 (SNLKLRSMFWQVLLLARGFWVA) lie on the Cytoplasmic side of the membrane.

The protein belongs to the G-protein coupled receptor T2R family.

It is found in the membrane. Its function is as follows. Receptor that may play a role in the perception of bitterness and is gustducin-linked. May play a role in sensing the chemical composition of the gastrointestinal content. The activity of this receptor may stimulate alpha gustducin, mediate PLC-beta-2 activation and lead to the gating of TRPM5. The sequence is that of Taste receptor type 2 member 41 (TAS2R41) from Gorilla gorilla gorilla (Western lowland gorilla).